A 474-amino-acid polypeptide reads, in one-letter code: PTS system N-acetylmuramic acid-specific EIIBC component (474 aa).

The region spanning 1–89 is the PTS EIIB type-1 domain; it reads MAKEISSELL…SELLGEAPVQ (89 aa). The Cytoplasmic segment spans residues 1–123; that stretch reads MAKEISSELL…LAKFATIFTP (123 aa). Cysteine 29 serves as the catalytic Phosphocysteine intermediate; for EIIB activity. Positions 115–474 constitute a PTS EIIC type-1 domain; the sequence is AKFATIFTPL…LFGCRNVNLD (360 aa). The helical transmembrane segment at 124–144 threads the bilayer; that stretch reads LIPGFIAAGLLLGIATLIATV. Topologically, residues 145–157 are periplasmic; that stretch reads MHVPADAQGTLPD. The helical transmembrane segment at 158–178 threads the bilayer; the sequence is ALNFMKVFSKGLFTFLVILVG. The Cytoplasmic portion of the chain corresponds to 179–180; it reads YN. A helical membrane pass occupies residues 181–201; sequence AAQAFGGTGVNGAIIAALFLL. Topologically, residues 202–217 are periplasmic; sequence GYNPAATTGYYAGFHD. The chain crosses the membrane as a helical span at residues 218 to 238; that stretch reads FFGLPIDPRGNIIGVLIAAWA. Residues 239 to 260 lie on the Cytoplasmic side of the membrane; it reads CARIEGMVRRFMPDDLDMLLTS. A helical membrane pass occupies residues 261 to 281; it reads LITLLITATLAYLIIMPLGGW. The Periplasmic portion of the chain corresponds to 282-301; sequence LFEGMSWLFMHLNSNPFGCA. Residues 302-322 form a helical membrane-spanning segment; that stretch reads VLAGLFLIAVVFGVHQGFIPV. Residues 323–334 lie on the Cytoplasmic side of the membrane; sequence YLALMDSQGFNS. The chain crosses the membrane as a helical span at residues 335 to 355; it reads LFPILSMAGAGQVGAALALYW. Topologically, residues 356–368 are periplasmic; that stretch reads RAQPHSALRSQVR. A helical transmembrane segment spans residues 369-389; it reads GAIIPGLLGVGEPLIYGVTLP. The Cytoplasmic portion of the chain corresponds to 390–393; it reads RMKP. A helical membrane pass occupies residues 394 to 414; that stretch reads FVTACLGGAAGGLFIGLIAWW. At 415–440 the chain is on the periplasmic side; that stretch reads GLPMGLNSAFGPSGLVALPLMTSAQG. Residues 441–461 traverse the membrane as a helical segment; the sequence is ILPAMAVYAGGILVAWVCGFI. The Cytoplasmic portion of the chain corresponds to 462 to 474; that stretch reads FTTLFGCRNVNLD.

The protein resides in the cell inner membrane. The enzyme catalyses N-acetyl-beta-D-muramate(out) + N(pros)-phospho-L-histidyl-[protein] = N-acetyl-beta-D-muramate 6-phosphate(in) + L-histidyl-[protein]. Functionally, the phosphoenolpyruvate-dependent sugar phosphotransferase system (sugar PTS), a major carbohydrate active transport system, catalyzes the phosphorylation of incoming sugar substrates concomitantly with their translocation across the cell membrane. This system is involved in N-acetylmuramic acid (MurNAc) transport, yielding cytoplasmic MurNAc-6-P. Is responsible for growth on MurNAc as the sole source of carbon and energy. Is also able to take up anhydro-N-acetylmuramic acid (anhMurNAc), but cannot phosphorylate the carbon 6, probably because of the 1,6-anhydro ring. This chain is PTS system N-acetylmuramic acid-specific EIIBC component (murP), found in Escherichia coli (strain K12).